We begin with the raw amino-acid sequence, 140 residues long: Phosphopantetheine adenylyltransferase (140 aa).

A substrate-binding site is contributed by serine 9. Residues 9–10 (SF) and histidine 17 each bind ATP. Lysine 41, threonine 74, and arginine 88 together coordinate substrate. Residues 89 to 91 (GLR), glutamate 99, and 124 to 130 (KRSLSST) each bind ATP.

It belongs to the bacterial CoaD family. In terms of assembly, homohexamer. Mg(2+) is required as a cofactor.

The protein resides in the cytoplasm. The enzyme catalyses (R)-4'-phosphopantetheine + ATP + H(+) = 3'-dephospho-CoA + diphosphate. Its pathway is cofactor biosynthesis; coenzyme A biosynthesis; CoA from (R)-pantothenate: step 4/5. Reversibly transfers an adenylyl group from ATP to 4'-phosphopantetheine, yielding dephospho-CoA (dPCoA) and pyrophosphate. The polypeptide is Phosphopantetheine adenylyltransferase (Mycoplasma mycoides subsp. mycoides SC (strain CCUG 32753 / NCTC 10114 / PG1)).